A 94-amino-acid chain; its full sequence is Small nuclear ribonucleoprotein E (94 aa).

Positions 14–94 constitute a Sm domain; the sequence is INCIFNFLQQ…DNITLITSAD (81 aa).

It belongs to the snRNP Sm proteins family. Component of the Sm core complex, present in spliceosomal snRNP U1, U2, U4/U6 and U5. The core complex contains SMB1, SMD1, SMD2, SMD3, SME1, SMX3 and SMX2 (Sm proteins B, D1, D2, D3, E, F and G, respectively), and is probably a heptameric ring structure. SME1 specifically interacts with SMX2 and SMX3. Component of the U4/U6-U5 tri-snRNP complex composed of the U4, U6 and U5 snRNAs and at least PRP3, PRP4, PRP6, PRP8, PRP18, PRP31, PRP38, SNU13, SNU23, SNU66, SNU114, SPP381, SMB1, SMD1, SMD2, SMD3, SMX2, SMX3, LSM2, LSM3, LSM4, LSM5, LSM6, LSM7, LSM8, BRR2 and DIB1.

It localises to the cytoplasm. The protein resides in the nucleus. Its function is as follows. Involved in pre-mRNA splicing. Binds and is required for the stability of snRNA U1, U2, U4 and U5 which contain a highly conserved structural motif called the Sm binding site. Involved in cap modification. This is Small nuclear ribonucleoprotein E (SME1) from Saccharomyces cerevisiae (strain ATCC 204508 / S288c) (Baker's yeast).